Reading from the N-terminus, the 223-residue chain is ATP-dependent dethiobiotin synthetase BioD (223 aa).

Threonine 16 is a binding site for Mg(2+). Lysine 37 is an active-site residue. Serine 41 contributes to the substrate binding site. Mg(2+) is bound by residues aspartate 50 and glutamate 111. Residues aspartate 50, glutamate 111–glycine 114, and asparagine 171–arginine 172 contribute to the ATP site.

The protein belongs to the dethiobiotin synthetase family. Homodimer. Requires Mg(2+) as cofactor.

Its subcellular location is the cytoplasm. The catalysed reaction is (7R,8S)-7,8-diammoniononanoate + CO2 + ATP = (4R,5S)-dethiobiotin + ADP + phosphate + 3 H(+). Its pathway is cofactor biosynthesis; biotin biosynthesis; biotin from 7,8-diaminononanoate: step 1/2. Its function is as follows. Catalyzes a mechanistically unusual reaction, the ATP-dependent insertion of CO2 between the N7 and N8 nitrogen atoms of 7,8-diaminopelargonic acid (DAPA, also called 7,8-diammoniononanoate) to form a ureido ring. This Anaeromyxobacter sp. (strain K) protein is ATP-dependent dethiobiotin synthetase BioD.